Consider the following 172-residue polypeptide: Keratin-associated protein 13-1 (172 aa).

5 tandem repeats follow at residues 46 to 55 (CQLGSSLYRG), 56 to 65 (CQQTCWEPTS), 66 to 75 (CQTSYVESSP), 76 to 85 (CQTSCYRPRT), and 92 to 101 (CQTTYSGSLG). Residues 46-101 (CQLGSSLYRGCQQTCWEPTSCQTSYVESSPCQTSCYRPRTSLLCSPCQTTYSGSLG) are 5 X 10 AA approximate repeats.

The protein belongs to the PMG family. Interacts with hair keratins. As to expression, weak expression seen in the late matrix and entire cortex area of the hair follicle.

In terms of biological role, in the hair cortex, hair keratin intermediate filaments are embedded in an interfilamentous matrix, consisting of hair keratin-associated proteins (KRTAP), which are essential for the formation of a rigid and resistant hair shaft through their extensive disulfide bond cross-linking with abundant cysteine residues of hair keratins. The matrix proteins include the high-sulfur and high-glycine-tyrosine keratins. The chain is Keratin-associated protein 13-1 (KRTAP13-1) from Homo sapiens (Human).